The following is a 204-amino-acid chain: NADH-ubiquinone oxidoreductase subunit 9 (204 aa).

It belongs to the complex I 30 kDa subunit family. In terms of assembly, complex I is composed of about 30 different subunits.

The protein localises to the mitochondrion inner membrane. It carries out the reaction a ubiquinone + NADH + 5 H(+)(in) = a ubiquinol + NAD(+) + 4 H(+)(out). In terms of biological role, core subunit of the mitochondrial membrane respiratory chain NADH dehydrogenase (Complex I) that is believed to belong to the minimal assembly required for catalysis. Complex I functions in the transfer of electrons from NADH to the respiratory chain. The immediate electron acceptor for the enzyme is believed to be ubiquinone. In Reclinomonas americana, this protein is NADH-ubiquinone oxidoreductase subunit 9 (NAD9).